The following is a 526-amino-acid chain: Cytochrome P450 4F5 (526 aa).

A heme-binding site is contributed by Cys470.

This sequence belongs to the cytochrome P450 family. It depends on heme as a cofactor. As to expression, high expression in liver and kidney. Lower expression in brain.

The protein resides in the endoplasmic reticulum membrane. The protein localises to the microsome membrane. It carries out the reaction an organic molecule + reduced [NADPH--hemoprotein reductase] + O2 = an alcohol + oxidized [NADPH--hemoprotein reductase] + H2O + H(+). This Rattus norvegicus (Rat) protein is Cytochrome P450 4F5 (Cyp4f5).